The sequence spans 57 residues: UPF0434 protein Shal_2504 (57 aa).

This sequence belongs to the UPF0434 family.

The polypeptide is UPF0434 protein Shal_2504 (Shewanella halifaxensis (strain HAW-EB4)).